A 206-amino-acid polypeptide reads, in one-letter code: Ribonuclease HII (206 aa).

An RNase H type-2 domain is found at 22 to 206 (RFICGVDEAG…ISFLKNILSL (185 aa)). The a divalent metal cation site is built by Asp-28, Glu-29, and Asp-120.

Belongs to the RNase HII family. It depends on Mn(2+) as a cofactor. Mg(2+) serves as cofactor.

It is found in the cytoplasm. The catalysed reaction is Endonucleolytic cleavage to 5'-phosphomonoester.. In terms of biological role, endonuclease that specifically degrades the RNA of RNA-DNA hybrids. The sequence is that of Ribonuclease HII from Caldicellulosiruptor bescii (strain ATCC BAA-1888 / DSM 6725 / KCTC 15123 / Z-1320) (Anaerocellum thermophilum).